Reading from the N-terminus, the 579-residue chain is MPALGEILLVPETDKGKSKDYIEVSEDEKITRTRSRSLKKKAIKASNKLTHSLRKRGKRVADQYAPIVIEDVRDEEEEKAVNVFRKALVSLDLLPPRHDDYHTMLRFLKARRFDLEKTVQMWEEMLKWRKENGVDTIIQDFVYDEYEEVQQYYPHGYHGVDREGRPVYIERLGKIDPGKLMKVTTLERFLRYHVQGFEKTFSEKFPACSIAAKRHINSSTTIIDVHGVSWMSFRKLAQDLVMRMQKIDGDNYPETLNQMYIINAGNGFKLVWNTVKGFLDPKTTSKIHVLGNKYRSHLLEIIDPSELPEFLGGNCKCAHEGGCMRFNKGPWNDPEIMKLVRSRDAMYKPKEMGLLENGEVAKLFSLRHVNTDMSSPDGGHVRERESHPEHDKRAQLSNQAEAVGVGRMEQSDSTSPLPNNLAVERSLTTSLQKVASFLARFILQLLGSLCLMFRILGRLVNKQPENQLRPELSVSVSQQQVPPPQVHPCWLRLQNLETMVTVLCDKPSSIPQEKEDILRDSLDRIKSIEQDLQKTKKALFLTASKQIELAECFENLKESSSTGMRSCWPRHCRNFQAET.

The 175-residue stretch at 145–319 (EYEEVQQYYP…FLGGNCKCAH (175 aa)) folds into the CRAL-TRIO domain. Residues 372 to 419 (DMSSPDGGHVRERESHPEHDKRAQLSNQAEAVGVGRMEQSDSTSPLPN) form a disordered region. Positions 379–394 (GHVRERESHPEHDKRA) are enriched in basic and acidic residues. The stretch at 512-539 (QEKEDILRDSLDRIKSIEQDLQKTKKAL) forms a coiled coil.

This sequence belongs to the SFH family.

The protein localises to the golgi apparatus membrane. The protein resides in the cell membrane. Required for transport of secretory proteins from the Golgi complex. Catalyzes the transfer of phosphatidylinositol and phosphatidylcholine between membranes in vitro. The chain is Phosphatidylinositol/phosphatidylcholine transfer protein SFH9 (SFH9) from Arabidopsis thaliana (Mouse-ear cress).